We begin with the raw amino-acid sequence, 489 residues long: uncharacterized protein (489 aa).

The next 12 helical transmembrane spans lie at 14–34, 36–56, 100–120, 127–147, 158–178, 203–223, 241–261, 286–306, 344–364, 380–400, 419–439, and 449–469; these read LLFV…ISLF, LGPF…IVTL, IIGP…FSGI, LVNT…LAFI, LIAL…IVAI, EISF…YAGV, ILIV…IILN, AAGL…NVST, IWFT…IPLV, VGSA…FKFI, LFCL…FPVI, and HTLT…LFLL.

The protein to M.genitalium MG226.

Its subcellular location is the cell membrane. This is an uncharacterized protein from Mycoplasma genitalium (strain ATCC 33530 / DSM 19775 / NCTC 10195 / G37) (Mycoplasmoides genitalium).